A 291-amino-acid polypeptide reads, in one-letter code: Elongation factor Ts (291 aa).

An involved in Mg(2+) ion dislocation from EF-Tu region spans residues 79–82; the sequence is TDFV.

Belongs to the EF-Ts family.

It is found in the cytoplasm. Its function is as follows. Associates with the EF-Tu.GDP complex and induces the exchange of GDP to GTP. It remains bound to the aminoacyl-tRNA.EF-Tu.GTP complex up to the GTP hydrolysis stage on the ribosome. This is Elongation factor Ts from Ruegeria pomeroyi (strain ATCC 700808 / DSM 15171 / DSS-3) (Silicibacter pomeroyi).